Reading from the N-terminus, the 101-residue chain is Protein Tat (101 aa).

The interval 1-24 (MDPVDPNLEPWNHPGSQPKTPCNK) is interaction with human CREBBP. The interval 1 to 48 (MDPVDPNLEPWNHPGSQPKTPCNKCFCKVCCWHCQVCFLNKGLGISYG) is transactivation. Zn(2+) contacts are provided by Cys-22, Cys-25, and Cys-27. The segment at 22–37 (CNKCFCKVCCWHCQVC) is cysteine-rich. An N6-acetyllysine; by host PCAF modification is found at Lys-28. Residues Cys-30, His-33, Cys-34, and Cys-37 each contribute to the Zn(2+) site. Positions 38 to 48 (FLNKGLGISYG) are core. Residues 48-57 (GRKKRKHRRG) show a composition bias toward basic residues. Residues 48–101 (GRKKRKHRRGTPQSSKGHQDPVPKQPLPTTRGNPTGPKESKKEVASKAEADQCD) are disordered. The Nuclear localization signal, RNA-binding (TAR), and protein transduction motif lies at 49 to 57 (RKKRKHRRG). The tract at residues 49–86 (RKKRKHRRGTPQSSKGHQDPVPKQPLPTTRGNPTGPKE) is interaction with the host capping enzyme RNGTT. Residues Lys-50 and Lys-51 each carry the N6-acetyllysine; by host EP300 and GCN5L2 modification. Arg-52 bears the Asymmetric dimethylarginine; by host PRMT6 mark. Lys-71 participates in a covalent cross-link: Glycyl lysine isopeptide (Lys-Gly) (interchain with G-Cter in ubiquitin). Positions 85–101 (KESKKEVASKAEADQCD) are enriched in basic and acidic residues.

This sequence belongs to the lentiviruses Tat family. As to quaternary structure, interacts with host CCNT1. Associates with the P-TEFb complex composed at least of Tat, P-TEFb (CDK9 and CCNT1), TAR RNA, RNA Pol II. Recruits the HATs CREBBP, TAF1/TFIID, EP300, PCAF and GCN5L2. Interacts with host KAT5/Tip60; this interaction targets the latter to degradation. Interacts with the host deacetylase SIRT1. Interacts with host capping enzyme RNGTT; this interaction stimulates RNGTT. Binds to host KDR, and to the host integrins ITGAV/ITGB3 and ITGA5/ITGB1. Interacts with host KPNB1/importin beta-1 without previous binding to KPNA1/importin alpha-1. Interacts with EIF2AK2. Interacts with host nucleosome assembly protein NAP1L1; this interaction may be required for the transport of Tat within the nucleus, since the two proteins interact at the nuclear rim. Interacts with host C1QBP/SF2P32; this interaction involves lysine-acetylated Tat. Interacts with the host chemokine receptors CCR2, CCR3 and CXCR4. Interacts with host DPP4/CD26; this interaction may trigger an anti-proliferative effect. Interacts with host LDLR. Interacts with the host extracellular matrix metalloproteinase MMP1. Interacts with host PRMT6; this interaction mediates Tat's methylation. Interacts with, and is ubiquitinated by MDM2/Hdm2. Interacts with host PSMC3 and HTATIP2. Interacts with STAB1; this interaction may overcome SATB1-mediated repression of IL2 and IL2RA (interleukin) in T cells by binding to the same domain than HDAC1. Interacts (when acetylated) with human CDK13, thereby increasing HIV-1 mRNA splicing and promoting the production of the doubly spliced HIV-1 protein Nef. Interacts with host TBP; this interaction modulates the activity of transcriptional pre-initiation complex. Interacts with host RELA. Interacts with host PLSCR1; this interaction negatively regulates Tat transactivation activity by altering its subcellular distribution. In terms of processing, asymmetrical arginine methylation by host PRMT6 seems to diminish the transactivation capacity of Tat and affects the interaction with host CCNT1. Acetylation by EP300, CREBBP, GCN5L2/GCN5 and PCAF regulates the transactivation activity of Tat. EP300-mediated acetylation of Lys-50 promotes dissociation of Tat from the TAR RNA through the competitive binding to PCAF's bromodomain. In addition, the non-acetylated Tat's N-terminus can also interact with PCAF. PCAF-mediated acetylation of Lys-28 enhances Tat's binding to CCNT1. Lys-50 is deacetylated by SIRT1. Post-translationally, polyubiquitination by host MDM2 does not target Tat to degradation, but activates its transactivation function and fosters interaction with CCNT1 and TAR RNA. In terms of processing, phosphorylated by EIF2AK2 on serine and threonine residues adjacent to the basic region important for TAR RNA binding and function. Phosphorylation of Tat by EIF2AK2 is dependent on the prior activation of EIF2AK2 by dsRNA.

Its subcellular location is the host nucleus. The protein localises to the host nucleolus. It localises to the host cytoplasm. The protein resides in the secreted. Transcriptional activator that increases RNA Pol II processivity, thereby increasing the level of full-length viral transcripts. Recognizes a hairpin structure at the 5'-LTR of the nascent viral mRNAs referred to as the transactivation responsive RNA element (TAR) and recruits the cyclin T1-CDK9 complex (P-TEFb complex) that will in turn hyperphosphorylate the RNA polymerase II to allow efficient elongation. The CDK9 component of P-TEFb and other Tat-activated kinases hyperphosphorylate the C-terminus of RNA Pol II that becomes stabilized and much more processive. Other factors such as HTATSF1/Tat-SF1, SUPT5H/SPT5, and HTATIP2 are also important for Tat's function. Besides its effect on RNA Pol II processivity, Tat induces chromatin remodeling of proviral genes by recruiting the histone acetyltransferases (HATs) CREBBP, EP300 and PCAF to the chromatin. This also contributes to the increase in proviral transcription rate, especially when the provirus integrates in transcriptionally silent region of the host genome. To ensure maximal activation of the LTR, Tat mediates nuclear translocation of NF-kappa-B by interacting with host RELA. Through its interaction with host TBP, Tat may also modulate transcription initiation. Tat can reactivate a latently infected cell by penetrating in it and transactivating its LTR promoter. In the cytoplasm, Tat is thought to act as a translational activator of HIV-1 mRNAs. In terms of biological role, extracellular circulating Tat can be endocytosed by surrounding uninfected cells via the binding to several surface receptors such as CD26, CXCR4, heparan sulfate proteoglycans (HSPG) or LDLR. Neurons are rarely infected, but they internalize Tat via their LDLR. Through its interaction with nuclear HATs, Tat is potentially able to control the acetylation-dependent cellular gene expression. Modulates the expression of many cellular genes involved in cell survival, proliferation or in coding for cytokines or cytokine receptors. Tat plays a role in T-cell and neurons apoptosis. Tat induced neurotoxicity and apoptosis probably contribute to neuroAIDS. Circulating Tat also acts as a chemokine-like and/or growth factor-like molecule that binds to specific receptors on the surface of the cells, affecting many cellular pathways. In the vascular system, Tat binds to ITGAV/ITGB3 and ITGA5/ITGB1 integrins dimers at the surface of endothelial cells and competes with bFGF for heparin-binding sites, leading to an excess of soluble bFGF. This is Protein Tat from Homo sapiens (Human).